The chain runs to 433 residues: Histone acetyltransferase type B subunit 2 (433 aa).

5 WD repeats span residues 134–174 (NHDG…NTPS), 187–227 (GQHK…KPNN), 237–277 (GHTA…SAPK), 282–322 (AHTG…VKLH), and 326–366 (SHTD…QEQT). An interaction with the histone H4 N-terminus region spans residues 368 to 372 (DDAED). One copy of the WD 6 repeat lies at 383-433 (GHTSRPTDLAWSPHMEWALTSAAEDNIVMVWRPSKAVIDTGNEELTPDDLE).

Belongs to the WD repeat RBAP46/RBAP48/MSI1 family. Component of the HAT-B complex composed of at least HAT1 and HAT2. The HAT-B complex binds to histone H4 tail.

It localises to the cytoplasm. Its subcellular location is the nucleus. Functionally, regulatory subunit of the histone acetylase B (HAT-B) complex. The complex acetylates 'Lys-12' of histone H4 which is required for telomeric silencing. The protein is Histone acetyltransferase type B subunit 2 (HAT2) of Mycosarcoma maydis (Corn smut fungus).